A 516-amino-acid chain; its full sequence is 1-pyrroline-5-carboxylate dehydrogenase (516 aa).

Residues glutamate 287 and cysteine 321 contribute to the active site.

This sequence belongs to the aldehyde dehydrogenase family. RocA subfamily.

It catalyses the reaction L-glutamate 5-semialdehyde + NAD(+) + H2O = L-glutamate + NADH + 2 H(+). It participates in amino-acid degradation; L-proline degradation into L-glutamate; L-glutamate from L-proline: step 2/2. This Bacillus licheniformis (strain ATCC 14580 / DSM 13 / JCM 2505 / CCUG 7422 / NBRC 12200 / NCIMB 9375 / NCTC 10341 / NRRL NRS-1264 / Gibson 46) protein is 1-pyrroline-5-carboxylate dehydrogenase.